The chain runs to 304 residues: Ribosomal RNA small subunit methyltransferase H (304 aa).

S-adenosyl-L-methionine-binding positions include 37–39 (GGH), aspartate 57, phenylalanine 79, aspartate 100, and histidine 107.

This sequence belongs to the methyltransferase superfamily. RsmH family.

It localises to the cytoplasm. It catalyses the reaction cytidine(1402) in 16S rRNA + S-adenosyl-L-methionine = N(4)-methylcytidine(1402) in 16S rRNA + S-adenosyl-L-homocysteine + H(+). Functionally, specifically methylates the N4 position of cytidine in position 1402 (C1402) of 16S rRNA. The protein is Ribosomal RNA small subunit methyltransferase H of Bacteroides fragilis (strain ATCC 25285 / DSM 2151 / CCUG 4856 / JCM 11019 / LMG 10263 / NCTC 9343 / Onslow / VPI 2553 / EN-2).